Here is a 142-residue protein sequence, read N- to C-terminus: Large ribosomal subunit protein uL11 (142 aa).

Belongs to the universal ribosomal protein uL11 family. As to quaternary structure, part of the ribosomal stalk of the 50S ribosomal subunit. Interacts with L10 and the large rRNA to form the base of the stalk. L10 forms an elongated spine to which L12 dimers bind in a sequential fashion forming a multimeric L10(L12)X complex. One or more lysine residues are methylated.

Functionally, forms part of the ribosomal stalk which helps the ribosome interact with GTP-bound translation factors. The sequence is that of Large ribosomal subunit protein uL11 from Desulforudis audaxviator (strain MP104C).